The following is a 532-amino-acid chain: KICSTOR complex protein ITFG2 (532 aa).

The stretch at 19–48 is one FG-GAP 1; atypical repeat; that stretch reads FPHAICLGDVDNDTLNELVVGDTSGKLSVY. Ser104 bears the Phosphoserine mark. One copy of the FG-GAP 2; atypical repeat lies at 126–155; sequence NTKVMLISDIDGDGRCELVVGYTDRVVRAF. Residues 248 to 271 are disordered; the sequence is PHPQQERLHSPHRQHQASHSPDSS.

Part of the KICSTOR complex composed of KPTN, ITFG2, KICS2 and SZT2. SZT2 probably serves as a link between the other three proteins in the KICSTOR complex and may mediate the direct interaction with the GATOR complex via GATOR1. The KICSTOR complex interacts directly with the GATOR1 complex and most probably indirectly with the GATOR2 complex in an amino acid-independent manner.

The protein resides in the lysosome membrane. Functionally, as part of the KICSTOR complex functions in the amino acid-sensing branch of the TORC1 signaling pathway. Recruits, in an amino acid-independent manner, the GATOR1 complex to the lysosomal membranes and allows its interaction with GATOR2 and the RAG GTPases. Functions upstream of the RAG GTPases and is required to negatively regulate mTORC1 signaling in absence of amino acids. In absence of the KICSTOR complex mTORC1 is constitutively localized to the lysosome and activated. The KICSTOR complex is also probably involved in the regulation of mTORC1 by glucose. The polypeptide is KICSTOR complex protein ITFG2 (Bos taurus (Bovine)).